Here is a 71-residue protein sequence, read N- to C-terminus: Light-harvesting protein B-800/850 alpha chain (71 aa).

Residues 1-15 (MNQGKVWRVVKPTVG) are Cytoplasmic-facing. The chain crosses the membrane as a helical span at residues 16–36 (VPVYLGAVAVTALILHGGLLA). His31 is a binding site for a bacteriochlorophyll. Residues 37 to 50 (KTDWFGAYWNGGKK) are Periplasmic-facing. Residues 51–71 (AAAAAAAVAPAPVAAPQAPAQ) form a helical membrane-spanning segment.

It belongs to the antenna complex alpha subunit family. An alpha/beta heterodimer conjugated to 3 bacteriochlorophyll molecules. The core complex is formed by different alpha and beta chains, binding bacteriochlorophyll molecules, and arranged most probably in tetrameric structures disposed around the reaction center. The non-pigmented gamma chains may constitute additional components.

Its subcellular location is the cell membrane. Its function is as follows. Antenna complexes are light-harvesting systems, which transfer the excitation energy to the reaction centers. The sequence is that of Light-harvesting protein B-800/850 alpha chain (pucA) from Rubrivivax gelatinosus (Rhodocyclus gelatinosus).